The primary structure comprises 821 residues: KN motif and ankyrin repeat domain-containing protein 3 (821 aa).

Residues 1–10 (MAKFALNQNL) are compositionally biased toward polar residues. Disordered regions lie at residues 1–36 (MAKF…PYSV), 58–184 (GPAA…AQLQ), 224–333 (LLAG…APET), and 385–547 (AAEE…GRCE). Low complexity predominate over residues 77–88 (RPGLAGARSPGA). Positions 128–150 (PRVEHTLRETSRRLELAQTHERA) are enriched in basic and acidic residues. Positions 151-181 (PSPGRGVPRSPRGSGRSSPAPNLAPASPGPA) are enriched in low complexity. A phosphoserine mark is found at serine 152, serine 160, serine 164, serine 167, serine 168, and serine 177. Positions 181–230 (AQLQLVREQMAAALRRLRELEDQARTLPELQEQVRALRAEKARLLAGRAQ) form a coiled coil. Over residues 237 to 261 (AETRPDKLAQLRRLTERLATSERGG) the composition is skewed to basic and acidic residues. Phosphoserine is present on residues serine 271, serine 280, and serine 293. A coiled-coil region spans residues 367–404 (GVSELLRGRLRELEEAREAAEEAAAGARAQLREATTQT). Low complexity-rich tracts occupy residues 388 to 400 (EAAA…LREA) and 494 to 507 (NGGA…SGSG). ANK repeat units lie at residues 622 to 652 (NGNT…EVNR), 656 to 690 (AGYS…DVNA), 695 to 724 (TGQT…DVNA), 728 to 758 (DGAT…DPAI), and 762 to 785 (EGTS…LHAH). Positions 784-821 (AHLSSGQPDTQSESPPGSQTATPGEGECGDNGENPQVQ) are disordered. Residues 787–805 (SSGQPDTQSESPPGSQTAT) are compositionally biased toward polar residues.

Strongly expressed in breast, liver, lung, skeletal muscle and kidney.

In terms of biological role, may be involved in the control of cytoskeleton formation by regulating actin polymerization. This chain is KN motif and ankyrin repeat domain-containing protein 3, found in Homo sapiens (Human).